The primary structure comprises 70 residues: Small ribosomal subunit protein bS21 (70 aa).

This sequence belongs to the bacterial ribosomal protein bS21 family.

The polypeptide is Small ribosomal subunit protein bS21 (Chromobacterium violaceum (strain ATCC 12472 / DSM 30191 / JCM 1249 / CCUG 213 / NBRC 12614 / NCIMB 9131 / NCTC 9757 / MK)).